A 698-amino-acid chain; its full sequence is Dual trans-enoyl reductase/FAD-dependent monooxygenase tazHJ (698 aa).

NADP(+) contacts are provided by residues 54–57 (STAT), 78–81 (SPRH), tyrosine 96, and 279–280 (IA). FAD is bound by residues glutamate 299, glycine 312, and arginine 372. Arginine 455 is an active-site residue. Aspartate 571 and alanine 584 together coordinate FAD.

It in the N-terminal section; belongs to the zinc-containing alcohol dehydrogenase family. This sequence in the C-terminal section; belongs to the paxM FAD-dependent monooxygenase family.

Its pathway is secondary metabolite biosynthesis. Its function is as follows. Dual trans-enoyl reductase/FAD-dependent monooxygenase; part of the gene cluster that mediates the biosynthesis of azaterrilone A and other azaphilones, a class of fungal metabolites characterized by a highly oxygenated pyrano-quinone bicyclic core and exhibiting a broad range of bioactivities. The first step of the pathway begins with the non-reducing polyketide synthase tazA that assembles one acetyl-CoA starter unit, five malonyl-CoA units, and catalyzes a series of Claisen condensations, methylation, PT-mediated cyclization, and finally releases the first hexaketide precursor through the R-domain. The tazA product then undergoes reduction on its terminal ketone and the following pyran-ring formation by yet undetermined enzyme(s). Dehydration and enoyl reduction, possibly involving the trans-enoyl reductase tazE leads to the next intermediate. TazD is predicted as an acetyltransferase and might catalyze the acetylation steps leading to the synthesis of azaterrilone A. Azaterrilone A is not the final product of the taz pathway and both the highly reducing polyketide synthase tazB and the dual enzyme tazHJ catalyze late steps of the pathway, leading to the production of the 2 final stereoisomers that contain additional polyketide modification whose structures have still to be determined. The protein is Dual trans-enoyl reductase/FAD-dependent monooxygenase tazHJ of Aspergillus terreus (strain NIH 2624 / FGSC A1156).